Here is a 465-residue protein sequence, read N- to C-terminus: Cysteine--tRNA ligase (465 aa).

Residue Cys-30 coordinates Zn(2+). The 'HIGH' region signature appears at Ile-32–His-42. Residues Cys-214, His-239, and Glu-243 each contribute to the Zn(2+) site. The 'KMSKS' region motif lies at Lys-271–Ser-275. Residue Lys-274 coordinates ATP.

It belongs to the class-I aminoacyl-tRNA synthetase family. As to quaternary structure, monomer. It depends on Zn(2+) as a cofactor.

The protein resides in the cytoplasm. The enzyme catalyses tRNA(Cys) + L-cysteine + ATP = L-cysteinyl-tRNA(Cys) + AMP + diphosphate. In Burkholderia vietnamiensis (strain G4 / LMG 22486) (Burkholderia cepacia (strain R1808)), this protein is Cysteine--tRNA ligase.